The primary structure comprises 191 residues: Peptidyl-tRNA hydrolase (191 aa).

A tRNA-binding site is contributed by Tyr-17. His-22 (proton acceptor) is an active-site residue. Positions 68, 70, and 116 each coordinate tRNA.

Belongs to the PTH family. In terms of assembly, monomer.

It is found in the cytoplasm. It carries out the reaction an N-acyl-L-alpha-aminoacyl-tRNA + H2O = an N-acyl-L-amino acid + a tRNA + H(+). Its function is as follows. Hydrolyzes ribosome-free peptidyl-tRNAs (with 1 or more amino acids incorporated), which drop off the ribosome during protein synthesis, or as a result of ribosome stalling. Functionally, catalyzes the release of premature peptidyl moieties from peptidyl-tRNA molecules trapped in stalled 50S ribosomal subunits, and thus maintains levels of free tRNAs and 50S ribosomes. In Mycolicibacterium smegmatis (strain ATCC 700084 / mc(2)155) (Mycobacterium smegmatis), this protein is Peptidyl-tRNA hydrolase.